The chain runs to 363 residues: Histidinol-phosphate aminotransferase (363 aa).

Lys-226 bears the N6-(pyridoxal phosphate)lysine mark.

This sequence belongs to the class-II pyridoxal-phosphate-dependent aminotransferase family. Histidinol-phosphate aminotransferase subfamily. As to quaternary structure, homodimer. Requires pyridoxal 5'-phosphate as cofactor.

The enzyme catalyses L-histidinol phosphate + 2-oxoglutarate = 3-(imidazol-4-yl)-2-oxopropyl phosphate + L-glutamate. It participates in amino-acid biosynthesis; L-histidine biosynthesis; L-histidine from 5-phospho-alpha-D-ribose 1-diphosphate: step 7/9. This Campylobacter lari (strain RM2100 / D67 / ATCC BAA-1060) protein is Histidinol-phosphate aminotransferase.